Here is a 447-residue protein sequence, read N- to C-terminus: Probable glycosyltransferase 7 (447 aa).

The tract at residues 1 to 31 is disordered; that stretch reads MRATTGARHLHPPWRRGLRHHRQSTMPPRAS. Over 1 to 37 the chain is Cytoplasmic; it reads MRATTGARHLHPPWRRGLRHHRQSTMPPRASRGRLAD. Over residues 8–23 the composition is skewed to basic residues; it reads RHLHPPWRRGLRHHRQ. A helical; Signal-anchor for type II membrane protein transmembrane segment spans residues 38-60; the sequence is AALFTAGAVLGSVLLLTLASPFS. The Lumenal segment spans residues 61–447; sequence SSSSPSSGVG…LPFDHPTQTA (387 aa). 2 N-linked (GlcNAc...) asparagine glycosylation sites follow: asparagine 285 and asparagine 329.

It belongs to the glycosyltransferase 34 family.

Its subcellular location is the golgi apparatus membrane. In terms of biological role, probable glycosyltransferase that may be involved in the biosynthesis of xyloglucan. The sequence is that of Probable glycosyltransferase 7 from Oryza sativa subsp. indica (Rice).